The primary structure comprises 250 residues: PHD finger protein ALFIN-LIKE 3 (250 aa).

Position 1 is an N-acetylmethionine (Met1). The tract at residues 146–192 is disordered; the sequence is DKSSAANQNGNKSKSNSKVRTSEGKSSKTKQPKEEDEEIDEDDEDDH. Residues 149-163 show a composition bias toward low complexity; the sequence is SAANQNGNKSKSNSK. Positions 179–192 are enriched in acidic residues; it reads EEDEEIDEDDEDDH. A PHD-type zinc finger spans residues 194-246; it reads ETLCGACGDSDGADEFWICCDLCEKWFHGKCVKITPARAEHIKQYKCPSCSNK.

It belongs to the Alfin family. Ubiquitously expressed.

The protein resides in the nucleus. Its function is as follows. Histone-binding component that specifically recognizes H3 tails trimethylated on 'Lys-4' (H3K4me3), which mark transcription start sites of virtually all active genes. The chain is PHD finger protein ALFIN-LIKE 3 (AL3) from Arabidopsis thaliana (Mouse-ear cress).